The sequence spans 26 residues: Conotoxin Eb6.15 (26 aa).

Cystine bridges form between Cys7–Cys18 and Cys13–Cys25.

This sequence belongs to the conotoxin O1 superfamily. In terms of tissue distribution, expressed by the venom duct.

It is found in the secreted. This is Conotoxin Eb6.15 (E1) from Conus ebraeus (Hebrew cone).